We begin with the raw amino-acid sequence, 379 residues long: UDP-N-acetylglucosamine--N-acetylmuramyl-(pentapeptide) pyrophosphoryl-undecaprenol N-acetylglucosamine transferase (379 aa).

Residues 19–21 (TGG), asparagine 133, arginine 174, serine 207, isoleucine 261, and glutamine 306 contribute to the UDP-N-acetyl-alpha-D-glucosamine site.

This sequence belongs to the glycosyltransferase 28 family. MurG subfamily.

The protein resides in the cell inner membrane. The enzyme catalyses di-trans,octa-cis-undecaprenyl diphospho-N-acetyl-alpha-D-muramoyl-L-alanyl-D-glutamyl-meso-2,6-diaminopimeloyl-D-alanyl-D-alanine + UDP-N-acetyl-alpha-D-glucosamine = di-trans,octa-cis-undecaprenyl diphospho-[N-acetyl-alpha-D-glucosaminyl-(1-&gt;4)]-N-acetyl-alpha-D-muramoyl-L-alanyl-D-glutamyl-meso-2,6-diaminopimeloyl-D-alanyl-D-alanine + UDP + H(+). It functions in the pathway cell wall biogenesis; peptidoglycan biosynthesis. In terms of biological role, cell wall formation. Catalyzes the transfer of a GlcNAc subunit on undecaprenyl-pyrophosphoryl-MurNAc-pentapeptide (lipid intermediate I) to form undecaprenyl-pyrophosphoryl-MurNAc-(pentapeptide)GlcNAc (lipid intermediate II). The chain is UDP-N-acetylglucosamine--N-acetylmuramyl-(pentapeptide) pyrophosphoryl-undecaprenol N-acetylglucosamine transferase from Porphyromonas gingivalis (strain ATCC 33277 / DSM 20709 / CIP 103683 / JCM 12257 / NCTC 11834 / 2561).